The following is a 337-amino-acid chain: Tetraacyldisaccharide 4'-kinase (337 aa).

ATP is bound at residue 56–63 (VAGGAGKT).

Belongs to the LpxK family.

It catalyses the reaction a lipid A disaccharide + ATP = a lipid IVA + ADP + H(+). The protein operates within glycolipid biosynthesis; lipid IV(A) biosynthesis; lipid IV(A) from (3R)-3-hydroxytetradecanoyl-[acyl-carrier-protein] and UDP-N-acetyl-alpha-D-glucosamine: step 6/6. Functionally, transfers the gamma-phosphate of ATP to the 4'-position of a tetraacyldisaccharide 1-phosphate intermediate (termed DS-1-P) to form tetraacyldisaccharide 1,4'-bis-phosphate (lipid IVA). The chain is Tetraacyldisaccharide 4'-kinase from Rhodospirillum centenum (strain ATCC 51521 / SW).